Consider the following 457-residue polypeptide: Probable ATP-dependent RNA helicase DDX47 (457 aa).

Alanine 2 is subject to N-acetylalanine. A Phosphoserine modification is found at serine 9. Positions lysine 26–isoleucine 54 match the Q motif motif. Positions isoleucine 57 to cysteine 228 constitute a Helicase ATP-binding domain. Alanine 70–threonine 77 lines the ATP pocket. At threonine 151 the chain carries Phosphothreonine. Residues aspartate 176 to aspartate 179 carry the DEAD box motif. Residues lysine 239–methionine 399 form the Helicase C-terminal domain. The segment covering glutamate 415–valine 430 has biased composition (basic and acidic residues). The disordered stretch occupies residues glutamate 415–arginine 457. At serine 426 the chain carries Phosphoserine.

It belongs to the DEAD box helicase family. DDX47/RRP3 subfamily. Interacts with AGO1 and AGO2. Interacts with GABARAP. Interacts with NOL8; the interaction is RNA-dependent.

The protein resides in the nucleus. The protein localises to the nucleolus. The enzyme catalyses ATP + H2O = ADP + phosphate + H(+). Involved in apoptosis. May have a role in rRNA processing and mRNA splicing. Associates with pre-rRNA precursors. The polypeptide is Probable ATP-dependent RNA helicase DDX47 (DDX47) (Bos taurus (Bovine)).